Consider the following 933-residue polypeptide: uncharacterized protein (933 aa).

The span at 1-28 (MNGNLPHIQIQSPKNSLDHLNNGRQATH) shows a compositional bias: polar residues. Disordered stretches follow at residues 1–135 (MNGN…GESD), 173–194 (MDNESSEEERDGIPRVEGNAAD), and 252–275 (ATDFPNLAHESSEPSSSRHTADAQ). Residues 29–47 (NFEHGKPGDREEANGHADA) show a composition bias toward basic and acidic residues. Over residues 49-59 (SSSGRSRYLSS) the composition is skewed to low complexity. 2 stretches are compositionally biased toward polar residues: residues 87-101 (TLSFLNPSRASSNTH) and 108-135 (NRSSNVTRTVSGRKSNHGSSLTDTGESD). The span at 173–182 (MDNESSEEER) shows a compositional bias: acidic residues. Positions 264–275 (EPSSSRHTADAQ) are enriched in polar residues. WD repeat units follow at residues 314 to 353 (SSNNAIWAMKFSRDGRYLAVGGQDRILRIWAVLDSEHARS), 385 to 423 (GHTADILDLSWSRNNFLLSSSMDKTARLWHPVRKDCLCC), 425 to 465 (EHSD…VSFW), 467 to 506 (ELPELITAVAFSPDGGLAIAGTFVGLCLFYDTRGLRFRTQ), 517 to 563 (AKGS…LELK), 568 to 607 (ANAQSQNRAYFDDDGNYVICGSEDHQVFIWDLPPQHMHKT), 617 to 657 (ASVR…SVIS), and 665 to 710 (PSLR…AARK). Serine 722 carries the post-translational modification Phosphoserine. A disordered region spans residues 756-796 (NASQITNNENNGNDDIKKGDEPEEEHVGLRKNSTQEKNANL). Residues 757 to 768 (ASQITNNENNGN) are compositionally biased toward polar residues. Residues 769–783 (DDIKKGDEPEEEHVG) show a composition bias toward basic and acidic residues.

The protein resides in the endoplasmic reticulum. The protein localises to the nucleus. This is an uncharacterized protein from Schizosaccharomyces pombe (strain 972 / ATCC 24843) (Fission yeast).